A 104-amino-acid polypeptide reads, in one-letter code: MATKQKIRIRLKAFDYKLIDQSAAEIVDTAKRTGAIVKGPVPLPTRMKRFDILRSPHVNKTSRDQLEIRTHQRLMDIVDPTDKTVDALMKLDLPAGVDVEIKLQ.

The protein belongs to the universal ribosomal protein uS10 family. As to quaternary structure, part of the 30S ribosomal subunit.

Its function is as follows. Involved in the binding of tRNA to the ribosomes. The protein is Small ribosomal subunit protein uS10 of Variovorax paradoxus (strain S110).